A 493-amino-acid polypeptide reads, in one-letter code: Glycerol kinase (493 aa).

Position 13 (threonine 13) interacts with ADP. Residues threonine 13, threonine 14, and serine 15 each coordinate ATP. Sn-glycerol 3-phosphate is bound at residue threonine 13. Residue arginine 17 coordinates ADP. Arginine 83, glutamate 84, tyrosine 135, and aspartate 244 together coordinate sn-glycerol 3-phosphate. Positions 83, 84, 135, 244, and 245 each coordinate glycerol. Residues threonine 266 and glycine 309 each contribute to the ADP site. Threonine 266, glycine 309, glutamine 313, and glycine 410 together coordinate ATP. ADP contacts are provided by glycine 410 and asparagine 414.

This sequence belongs to the FGGY kinase family.

It carries out the reaction glycerol + ATP = sn-glycerol 3-phosphate + ADP + H(+). It functions in the pathway polyol metabolism; glycerol degradation via glycerol kinase pathway; sn-glycerol 3-phosphate from glycerol: step 1/1. With respect to regulation, inhibited by fructose 1,6-bisphosphate (FBP). Functionally, key enzyme in the regulation of glycerol uptake and metabolism. Catalyzes the phosphorylation of glycerol to yield sn-glycerol 3-phosphate. The protein is Glycerol kinase of Shewanella piezotolerans (strain WP3 / JCM 13877).